We begin with the raw amino-acid sequence, 743 residues long: 1,4-alpha-glucan branching enzyme GlgB (743 aa).

Aspartate 416 functions as the Nucleophile in the catalytic mechanism. Glutamate 469 (proton donor) is an active-site residue.

Belongs to the glycosyl hydrolase 13 family. GlgB subfamily. As to quaternary structure, monomer.

The catalysed reaction is Transfers a segment of a (1-&gt;4)-alpha-D-glucan chain to a primary hydroxy group in a similar glucan chain.. Its pathway is glycan biosynthesis; glycogen biosynthesis. Catalyzes the formation of the alpha-1,6-glucosidic linkages in glycogen by scission of a 1,4-alpha-linked oligosaccharide from growing alpha-1,4-glucan chains and the subsequent attachment of the oligosaccharide to the alpha-1,6 position. The chain is 1,4-alpha-glucan branching enzyme GlgB from Shewanella baltica (strain OS223).